Consider the following 261-residue polypeptide: Ribosome-inactivating protein PD-L3/PD-L4 (261 aa).

N10 carries an N-linked (GlcNAc...) asparagine; in PD-L3 glycan. Disulfide bonds link C34–C258 and C84–C105. The active site involves E175.

The protein belongs to the ribosome-inactivating protein family. Type 1 RIP subfamily.

It catalyses the reaction Endohydrolysis of the N-glycosidic bond at one specific adenosine on the 28S rRNA.. In terms of biological role, inhibits protein synthesis. Does not cleave supercoiled pBR322 dsDNA. This Phytolacca dioica (Bella sombra tree) protein is Ribosome-inactivating protein PD-L3/PD-L4.